The primary structure comprises 217 residues: 3,4-dihydroxy-2-butanone 4-phosphate synthase (217 aa).

D-ribulose 5-phosphate-binding positions include arginine 37–glutamate 38, aspartate 42, arginine 150–threonine 154, and glutamate 174. Glutamate 38 is a Mg(2+) binding site. Histidine 153 contacts Mg(2+).

It belongs to the DHBP synthase family. As to quaternary structure, homodimer. It depends on Mg(2+) as a cofactor. Requires Mn(2+) as cofactor.

The catalysed reaction is D-ribulose 5-phosphate = (2S)-2-hydroxy-3-oxobutyl phosphate + formate + H(+). It participates in cofactor biosynthesis; riboflavin biosynthesis; 2-hydroxy-3-oxobutyl phosphate from D-ribulose 5-phosphate: step 1/1. Catalyzes the conversion of D-ribulose 5-phosphate to formate and 3,4-dihydroxy-2-butanone 4-phosphate. This Shewanella baltica (strain OS223) protein is 3,4-dihydroxy-2-butanone 4-phosphate synthase.